The following is a 255-amino-acid chain: uncharacterized protein (255 aa).

Residues 1–23 (MKRLNKLVLYISFLILVISFTAG) form the signal peptide. Cys-24 carries the N-palmitoyl cysteine lipid modification. A lipid anchor (S-diacylglycerol cysteine) is attached at Cys-24.

Belongs to the staphylococcal tandem lipoprotein family.

The protein localises to the cell membrane. This is an uncharacterized protein from Staphylococcus aureus (strain N315).